The sequence spans 456 residues: Methylenetetrahydrofolate--tRNA-(uracil-5-)-methyltransferase TrmFO (456 aa).

12–17 (GGGLAG) serves as a coordination point for FAD.

It belongs to the MnmG family. TrmFO subfamily. The cofactor is FAD.

It is found in the cytoplasm. The enzyme catalyses uridine(54) in tRNA + (6R)-5,10-methylene-5,6,7,8-tetrahydrofolate + NADH + H(+) = 5-methyluridine(54) in tRNA + (6S)-5,6,7,8-tetrahydrofolate + NAD(+). It catalyses the reaction uridine(54) in tRNA + (6R)-5,10-methylene-5,6,7,8-tetrahydrofolate + NADPH + H(+) = 5-methyluridine(54) in tRNA + (6S)-5,6,7,8-tetrahydrofolate + NADP(+). Functionally, catalyzes the folate-dependent formation of 5-methyl-uridine at position 54 (M-5-U54) in all tRNAs. This Picosynechococcus sp. (strain ATCC 27264 / PCC 7002 / PR-6) (Agmenellum quadruplicatum) protein is Methylenetetrahydrofolate--tRNA-(uracil-5-)-methyltransferase TrmFO.